The sequence spans 378 residues: MKHHLIEHRGEQTPGTAVGMASPDAAEESTGVCWPGGAMRRNESSPRPGPAFLPDDDIYLAARAQGVLGWSSSPSSQSSSEYQSYSQYQSWDSSKSEEQQETPPESVCALYTHVQTVRGVAVAWETDDGFEPVTRKPLIREAEFIKRQRRKGSSFEMASNTDLRWELEDCKHYCPQTEDPVDCCMQELRAPPDWLVTTNHGLRCVACCRVFPTLEALLDHAQHGIQDGFSCQIFFEEMLERKRTRDQKQDQQPVEEEQSLSDSSECTRLLTKVLPWQQQPQQQPQEQQKQQQQQQQKQRQQEQQQHQQQQQQPQPLKQQQQQQQQQPLQPQPLKQQPLQPLQPQPQPQPQKQQQRQQQRQQQPPRQQQKQQPLQQQGK.

Disordered regions lie at residues 1 to 56 (MKHH…LPDD), 244 to 265 (TRDQ…DSSE), and 277 to 378 (QQQP…QQGK). Composition is skewed to low complexity over residues 277 to 339 (QQQP…QPLQ) and 349 to 378 (PQKQ…QQGK).

It belongs to the FAM170 family. As to quaternary structure, interacts with GOPC. In terms of tissue distribution, exclusively expressed in adult testis (at protein level). Expression first started at postnatal week 3 in round spermatids, elongated spermatids and mature sperm.

The protein localises to the cytoplasmic vesicle. It localises to the secretory vesicle. It is found in the acrosome. The protein resides in the acrosome outer membrane. Functionally, plays a role in fertilization through the acrosome reaction. This is Protein FAM170B from Mus musculus (Mouse).